Consider the following 270-residue polypeptide: Methionine-rich protein (270 aa).

Positions 1 to 18 are cleaved as a signal peptide; the sequence is MLSLWAIGLLGLLNQVEA. Residues 31-52 are compositionally biased toward polar residues; that stretch reads QRSAQFSSSGWGTSPAAQNPWS. The disordered stretch occupies residues 31–95; sequence QRSAQFSSSG…MPGSMPGAMP (65 aa). Residues 56-95 are compositionally biased toward low complexity; it reads PMPNTNMPNMNTGSLPGSMPGAMPGSMPGAMPGSMPGAMP.

In terms of tissue distribution, component of the acid-soluble organic matrix of calcified layers of the shell (at protein level).

The protein localises to the secreted. This Lottia gigantea (Giant owl limpet) protein is Methionine-rich protein.